The sequence spans 378 residues: Acid phosphatase-like protein XcAP-2 (378 aa).

The N-terminal stretch at 1–19 (MKTTILLLVVLTIVQLSKA) is a signal peptide. 3 disulfide bridges follow: C147-C374, C168-C220, and C347-C351.

This sequence belongs to the histidine acid phosphatase family.

The protein resides in the secreted. Functionally, probably modulates blood feeding of fleas on vertebrate species by binding and sequestering different mediators involved in the host response. Binds histamine. Binds leukotriene B4, leukotriene C4, leukotriene D4 and leukotriene E4. Does not bind serotonin, adrenaline, noradrenaline, ADP, and stable analogs of thromboxane A2: U-46619 and cTXA2. This Xenopsylla cheopis (Oriental rat flea) protein is Acid phosphatase-like protein XcAP-2.